Consider the following 316-residue polypeptide: Bifunctional peptidase and (3S)-lysyl hydroxylase Jmjd7 (316 aa).

The JmjC domain occupies 128 to 307 (VQKQCSNLPT…LKYSYFQLMD (180 aa)). The Fe cation site is built by His178, Asp180, and His277.

Homodimer; disulfide-linked. Interacts with DRG1 and DRG2. Requires Fe(2+) as cofactor.

The protein resides in the nucleus. It is found in the cytoplasm. The catalysed reaction is L-lysyl-[protein] + 2-oxoglutarate + O2 = (3S)-3-hydroxy-L-lysyl-[protein] + succinate + CO2. Functionally, bifunctional enzyme that acts both as an endopeptidase and 2-oxoglutarate-dependent monooxygenase. Endopeptidase that cleaves histones N-terminal tails at the carboxyl side of methylated arginine or lysine residues, to generate 'tailless nucleosomes', which may trigger transcription elongation. Preferentially recognizes and cleaves monomethylated and dimethylated arginine residues of histones H2, H3 and H4. After initial cleavage, continues to digest histones tails via its aminopeptidase activity. Additionally, may play a role in protein biosynthesis by modifying the translation machinery. Acts as a Fe(2+) and 2-oxoglutarate-dependent monooxygenase, catalyzing (S)-stereospecific hydroxylation at C-3 of 'Lys-22' of DRG1 and 'Lys-21' of DRG2 translation factors (TRAFAC), promoting their interaction with ribonucleic acids (RNA). The polypeptide is Bifunctional peptidase and (3S)-lysyl hydroxylase Jmjd7 (Mus musculus (Mouse)).